Consider the following 275-residue polypeptide: uncharacterized protein (275 aa).

NAD(+) contacts are provided by residues 20–22 (RGQ), 41–42 (DI), 80–81 (DV), and N107. S160 is a binding site for substrate. Catalysis depends on Y173, which acts as the Proton acceptor. Residues K177 and 206–208 (VET) each bind NAD(+).

It belongs to the short-chain dehydrogenases/reductases (SDR) family.

This is an uncharacterized protein from Mycolicibacterium paratuberculosis (strain ATCC BAA-968 / K-10) (Mycobacterium paratuberculosis).